A 492-amino-acid polypeptide reads, in one-letter code: Katanin p60 ATPase-containing subunit A1 (492 aa).

Residues 91–158 are disordered; sequence PAHDGEVWSL…MKPVRAREKK (68 aa). Residues 138–147 show a composition bias toward polar residues; that stretch reads LPSSKNTNNV. Position 250–257 (250–257) interacts with ATP; it reads GPPGTGKT.

The protein belongs to the AAA ATPase family. Katanin p60 subunit A1 subfamily. As to quaternary structure, can homooligomerize into hexameric rings, which may be promoted by interaction with microtubules. Interacts with katnb1, which may serve as a targeting subunit.

The protein localises to the cytoplasm. The protein resides in the cytoskeleton. It is found in the microtubule organizing center. It localises to the centrosome. Its subcellular location is the spindle pole. The protein localises to the spindle. The catalysed reaction is n ATP + n H2O + a microtubule = n ADP + n phosphate + (n+1) alpha/beta tubulin heterodimers.. With respect to regulation, ATPase activity is stimulated by microtubules, which promote homooligomerization. ATP-dependent microtubule severing is stimulated by interaction with katnb1. Functionally, catalytic subunit of a complex which severs microtubules in an ATP-dependent manner. Microtubule severing may promote rapid reorganization of cellular microtubule arrays and the release of microtubules from the centrosome following nucleation. The chain is Katanin p60 ATPase-containing subunit A1 (katna1) from Xenopus tropicalis (Western clawed frog).